Here is a 417-residue protein sequence, read N- to C-terminus: Gamma-glutamyl phosphate reductase (417 aa).

Belongs to the gamma-glutamyl phosphate reductase family.

The protein localises to the cytoplasm. It catalyses the reaction L-glutamate 5-semialdehyde + phosphate + NADP(+) = L-glutamyl 5-phosphate + NADPH + H(+). It participates in amino-acid biosynthesis; L-proline biosynthesis; L-glutamate 5-semialdehyde from L-glutamate: step 2/2. Catalyzes the NADPH-dependent reduction of L-glutamate 5-phosphate into L-glutamate 5-semialdehyde and phosphate. The product spontaneously undergoes cyclization to form 1-pyrroline-5-carboxylate. This chain is Gamma-glutamyl phosphate reductase, found in Escherichia coli (strain 55989 / EAEC).